The primary structure comprises 162 residues: UPF0262 protein Acry_0160 (162 aa).

The protein belongs to the UPF0262 family.

The protein is UPF0262 protein Acry_0160 of Acidiphilium cryptum (strain JF-5).